Here is a 193-residue protein sequence, read N- to C-terminus: dTTP/UTP pyrophosphatase (193 aa).

Asp77 acts as the Proton acceptor in catalysis.

Belongs to the Maf family. YhdE subfamily. Requires a divalent metal cation as cofactor.

The protein localises to the cytoplasm. The enzyme catalyses dTTP + H2O = dTMP + diphosphate + H(+). It catalyses the reaction UTP + H2O = UMP + diphosphate + H(+). In terms of biological role, nucleoside triphosphate pyrophosphatase that hydrolyzes dTTP and UTP. May have a dual role in cell division arrest and in preventing the incorporation of modified nucleotides into cellular nucleic acids. This chain is dTTP/UTP pyrophosphatase, found in Bacteroides thetaiotaomicron (strain ATCC 29148 / DSM 2079 / JCM 5827 / CCUG 10774 / NCTC 10582 / VPI-5482 / E50).